The sequence spans 374 residues: Anhydro-N-acetylmuramic acid kinase (374 aa).

12 to 19 (GTSLDGID) is a binding site for ATP.

Belongs to the anhydro-N-acetylmuramic acid kinase family.

The enzyme catalyses 1,6-anhydro-N-acetyl-beta-muramate + ATP + H2O = N-acetyl-D-muramate 6-phosphate + ADP + H(+). Its pathway is amino-sugar metabolism; 1,6-anhydro-N-acetylmuramate degradation. It functions in the pathway cell wall biogenesis; peptidoglycan recycling. In terms of biological role, catalyzes the specific phosphorylation of 1,6-anhydro-N-acetylmuramic acid (anhMurNAc) with the simultaneous cleavage of the 1,6-anhydro ring, generating MurNAc-6-P. Is required for the utilization of anhMurNAc either imported from the medium or derived from its own cell wall murein, and thus plays a role in cell wall recycling. This chain is Anhydro-N-acetylmuramic acid kinase, found in Sodalis glossinidius (strain morsitans).